Reading from the N-terminus, the 599-residue chain is Endo-1,4-beta-xylanase B (599 aa).

The signal sequence occupies residues methionine 1–alanine 37. The CBM2 domain maps to alanine 38–alanine 136. Cysteine 39 and cysteine 133 are disulfide-bonded. Positions leucine 163–valine 289 constitute a CBM6 domain. The GH10 domain maps to serine 315–asparagine 595. Glutamate 431 acts as the Proton donor in catalysis. Glutamate 530 acts as the Nucleophile in catalysis.

It belongs to the glycosyl hydrolase 10 (cellulase F) family.

The catalysed reaction is Endohydrolysis of (1-&gt;4)-beta-D-xylosidic linkages in xylans.. It participates in glycan metabolism; hemicellulose degradation. Its function is as follows. Xylanase B contributes to hydrolyze hemicellulose, the major component of plant cell-walls. This Cellvibrio japonicus (strain Ueda107) (Pseudomonas fluorescens subsp. cellulosa) protein is Endo-1,4-beta-xylanase B (xynB).